The chain runs to 177 residues: ATP synthase subunit b, chloroplastic (177 aa).

Residues 26–44 (IINLSIVLFVVIRFLGEAL) form a helical membrane-spanning segment.

Belongs to the ATPase B chain family. In terms of assembly, F-type ATPases have 2 components, F(1) - the catalytic core - and F(0) - the membrane proton channel. F(1) has five subunits: alpha(3), beta(3), gamma(1), delta(1), epsilon(1). F(0) has four main subunits: a(1), b(1), b'(1) and c(10-14). The alpha and beta chains form an alternating ring which encloses part of the gamma chain. F(1) is attached to F(0) by a central stalk formed by the gamma and epsilon chains, while a peripheral stalk is formed by the delta, b and b' chains.

It localises to the plastid. The protein localises to the chloroplast thylakoid membrane. Its function is as follows. F(1)F(0) ATP synthase produces ATP from ADP in the presence of a proton or sodium gradient. F-type ATPases consist of two structural domains, F(1) containing the extramembraneous catalytic core and F(0) containing the membrane proton channel, linked together by a central stalk and a peripheral stalk. During catalysis, ATP synthesis in the catalytic domain of F(1) is coupled via a rotary mechanism of the central stalk subunits to proton translocation. In terms of biological role, component of the F(0) channel, it forms part of the peripheral stalk, linking F(1) to F(0). This Bigelowiella natans (Pedinomonas minutissima) protein is ATP synthase subunit b, chloroplastic.